The following is a 261-amino-acid chain: MICOS complex subunit Mic25 (261 aa).

A lipid anchor (N-myristoyl glycine) is attached at glycine 2. Serine 13, serine 31, and serine 33 each carry phosphoserine. 3 disordered regions span residues 39 to 59 (KDCSQPSAGEQLAPGPGPECS), 81 to 114 (CGPAEGTYKAPQGDFKVSRAENSDGQQSSAVKED), and 140 to 165 (TEKHLKASLPKKKATHEQQQSDRLTR). The stretch at 109 to 202 (SAVKEDLKKF…AELYKLSSQQ (94 aa)) forms a coiled coil. The segment covering 154–165 (THEQQQSDRLTR) has biased composition (basic and acidic residues). A CHCH domain is found at 220–261 (EPVCSGLQAQILRCYRDHLHEVLLCSDLAKAYQHCVSTARKG). 2 consecutive short sequence motifs (cx9C motif) follow at residues 223–233 (CSGLQAQILRC) and 244–254 (CSDLAKAYQHC). Cystine bridges form between cysteine 223-cysteine 254 and cysteine 233-cysteine 244.

Belongs to the MICOS complex subunit Mic19 family. Metazoan Mic25 subfamily. In terms of assembly, component of the mitochondrial contact site and cristae organizing system (MICOS) complex, composed of at least MICOS10/MIC10, CHCHD3/MIC19, CHCHD6/MIC25, APOOL/MIC27, IMMT/MIC60, APOO/MIC23/MIC26 and MICOS13/MIC13. This complex was also known under the names MINOS or MitOS complex. The MICOS complex associates with mitochondrial outer membrane proteins SAMM50, MTX1 and MTX2 (together described as components of the mitochondrial outer membrane sorting assembly machinery (SAM) complex) and DNAJC11, mitochondrial inner membrane protein TMEM11 and with HSPA9. The MICOS and SAM complexes together with DNAJC11 are part of a large protein complex spanning both membranes termed the mitochondrial intermembrane space bridging (MIB) complex. Interacts with DISC1. Interacts with IMMT/MIC60.

It localises to the mitochondrion inner membrane. Its subcellular location is the mitochondrion. Its function is as follows. Component of the MICOS complex, a large protein complex of the mitochondrial inner membrane that plays crucial roles in the maintenance of crista junctions, inner membrane architecture, and formation of contact sites to the outer membrane. The polypeptide is MICOS complex subunit Mic25 (Chchd6) (Rattus norvegicus (Rat)).